Reading from the N-terminus, the 813-residue chain is Leucine--tRNA ligase (813 aa).

The 'HIGH' region motif lies at 39 to 49 (PYPSGRIHMGH). Residues 582-586 (KMSKS) carry the 'KMSKS' region motif. ATP is bound at residue Lys585.

It belongs to the class-I aminoacyl-tRNA synthetase family.

The protein resides in the cytoplasm. It carries out the reaction tRNA(Leu) + L-leucine + ATP = L-leucyl-tRNA(Leu) + AMP + diphosphate. The polypeptide is Leucine--tRNA ligase (Campylobacter hominis (strain ATCC BAA-381 / DSM 21671 / CCUG 45161 / LMG 19568 / NCTC 13146 / CH001A)).